Consider the following 643-residue polypeptide: Melanoma-associated antigen C3 (643 aa).

2 MAGE domains span residues 184 to 384 and 456 to 643; these read LDEK…AAGM and LDEK…FCPE. The tract at residues 347–421 is disordered; that stretch reads NPQGLAGHRQ…PQSPLDSCSS (75 aa). Positions 354-363 are enriched in basic and acidic residues; sequence HRQEDGRRGL. A compositionally biased stretch (pro residues) spans 383 to 414; it reads GMPPLPQSPPEIPPQGPPKISPQGPPQSPPQS. A phosphothreonine mark is found at threonine 478, threonine 484, and threonine 485.

Expressed in testis. Not expressed in other normal tissues, but is expressed in tumors of different histological origins.

In Homo sapiens (Human), this protein is Melanoma-associated antigen C3 (MAGEC3).